The chain runs to 350 residues: uncharacterized protein (350 aa).

An N-terminal signal peptide occupies residues 1 to 27; it reads MKNKKRVLIASSLSCAILLLSAATTQA. The tract at residues 28–71 is disordered; that stretch reads NSAHKDSQDQNKKEHVDKSQQKEKRNVTNKDKNSTVPDDIGKNG. Residues 30–60 show a composition bias toward basic and acidic residues; it reads AHKDSQDQNKKEHVDKSQQKEKRNVTNKDKN.

The protein belongs to the aerolysin family.

This is an uncharacterized protein from Staphylococcus aureus (strain MSSA476).